A 281-amino-acid polypeptide reads, in one-letter code: Ribosomal RNA small subunit methyltransferase A (281 aa).

S-adenosyl-L-methionine-binding residues include N36, L38, G63, E84, D109, and N127.

This sequence belongs to the class I-like SAM-binding methyltransferase superfamily. rRNA adenine N(6)-methyltransferase family. RsmA subfamily.

The protein localises to the cytoplasm. It carries out the reaction adenosine(1518)/adenosine(1519) in 16S rRNA + 4 S-adenosyl-L-methionine = N(6)-dimethyladenosine(1518)/N(6)-dimethyladenosine(1519) in 16S rRNA + 4 S-adenosyl-L-homocysteine + 4 H(+). In terms of biological role, specifically dimethylates two adjacent adenosines (A1518 and A1519) in the loop of a conserved hairpin near the 3'-end of 16S rRNA in the 30S particle. May play a critical role in biogenesis of 30S subunits. The sequence is that of Ribosomal RNA small subunit methyltransferase A from Borreliella afzelii (strain PKo) (Borrelia afzelii).